A 104-amino-acid polypeptide reads, in one-letter code: Iron-sulfur cluster assembly protein CyaY (104 aa).

Belongs to the frataxin family.

Involved in iron-sulfur (Fe-S) cluster assembly. May act as a regulator of Fe-S biogenesis. The protein is Iron-sulfur cluster assembly protein CyaY of Vibrio parahaemolyticus serotype O3:K6 (strain RIMD 2210633).